The sequence spans 142 residues: Large ribosomal subunit protein uL13 (142 aa).

Belongs to the universal ribosomal protein uL13 family. In terms of assembly, part of the 50S ribosomal subunit.

In terms of biological role, this protein is one of the early assembly proteins of the 50S ribosomal subunit, although it is not seen to bind rRNA by itself. It is important during the early stages of 50S assembly. The chain is Large ribosomal subunit protein uL13 from Psychrobacter sp. (strain PRwf-1).